The primary structure comprises 321 residues: Torsin-2A (321 aa).

Residues Met1 to Ala26 form the signal peptide. Gly93 to Ser100 contributes to the ATP binding site. N-linked (GlcNAc...) asparagine glycosylation is present at Asn149.

The protein belongs to the ClpA/ClpB family. Torsin subfamily. Homohexamer. Interacts with TOR1AIP1. In terms of processing, N-glycosylated. Expressed at similar levels in liver, muscle and brain (at protein level).

The protein resides in the endoplasmic reticulum lumen. This Mus musculus (Mouse) protein is Torsin-2A (Tor2a).